The following is an 826-amino-acid chain: Prominin-1-A (826 aa).

3 helical membrane passes run 50 to 70 (YYEPGAIGILFNMMHAFLFVV), 106 to 126 (VVCAALGLLFTVLLPLVGLLF), and 153 to 173 (LLTTLLLTTTFIITAGVLCAY). N-linked (GlcNAc...) asparagine glycans are attached at residues N178, N268, N286, N327, N388, and N404. The next 2 helical transmembrane spans lie at 439–459 (CMIVLILTFNFLGLLCGILGF) and 483–503 (VGFSFLFSWVLMGVITALFLA). 4 N-linked (GlcNAc...) asparagine glycosylation sites follow: N576, N582, N617, and N693.

Belongs to the prominin family.

It localises to the apical cell membrane. The protein resides in the cell projection. The protein localises to the microvillus membrane. It is found in the endoplasmic reticulum. Its subcellular location is the endoplasmic reticulum-Golgi intermediate compartment. Its function is as follows. May play a role in cell differentiation, proliferation and apoptosis. Binds cholesterol in cholesterol-containing plasma membrane microdomains and may play a role in the organization of the apical plasma membrane in epithelial cells. Involved in regulation of MAPK and Akt signaling pathways. The sequence is that of Prominin-1-A (prom1a) from Danio rerio (Zebrafish).